A 414-amino-acid chain; its full sequence is NADH-ubiquinone oxidoreductase chain 4 (414 aa).

Transmembrane regions (helical) follow at residues 18 to 38 (LVQL…MIGV), 47 to 67 (IAAF…LMSI), 96 to 116 (IIFI…PLHL), 126 to 146 (PTAG…YGYI), 160 to 180 (YFPI…IATL), 188 to 208 (IVAY…FSGV), 216 to 236 (IILM…IGVI), 254 to 274 (MMPI…AFPI), 293 to 313 (IIIA…SFWL), and 375 to 395 (VNIF…IVGM).

It belongs to the complex I subunit 4 family.

The protein localises to the mitochondrion membrane. The enzyme catalyses a ubiquinone + NADH + 5 H(+)(in) = a ubiquinol + NAD(+) + 4 H(+)(out). Functionally, core subunit of the mitochondrial membrane respiratory chain NADH dehydrogenase (Complex I) that is believed to belong to the minimal assembly required for catalysis. Complex I functions in the transfer of electrons from NADH to the respiratory chain. The immediate electron acceptor for the enzyme is believed to be ubiquinone. This is NADH-ubiquinone oxidoreductase chain 4 (nad4) from Dictyostelium citrinum (Slime mold).